The primary structure comprises 66 residues: Protein translocase subunit SecE (66 aa).

A helical membrane pass occupies residues 34–54 (LVVIVAVFVFSLICLVLDYGI).

The protein belongs to the SecE/SEC61-gamma family. Component of the Sec protein translocase complex. Heterotrimer consisting of SecY, SecE and SecG subunits. The heterotrimers can form oligomers, although 1 heterotrimer is thought to be able to translocate proteins. Interacts with the ribosome. Interacts with SecDF, and other proteins may be involved. Interacts with SecA.

It localises to the cell inner membrane. Its function is as follows. Essential subunit of the Sec protein translocation channel SecYEG. Clamps together the 2 halves of SecY. May contact the channel plug during translocation. This Rickettsia bellii (strain RML369-C) protein is Protein translocase subunit SecE.